A 130-amino-acid polypeptide reads, in one-letter code: Small ribosomal subunit protein uS9 (130 aa).

It belongs to the universal ribosomal protein uS9 family.

The polypeptide is Small ribosomal subunit protein uS9 (Burkholderia cenocepacia (strain HI2424)).